The sequence spans 516 residues: L-amino acid oxidase (516 aa).

Positions 1–18 (MNVFFMFSLLFLAALESC) are cleaved as a signal peptide. Residues 61–62 (MS), 81–82 (EA), arginine 89, and 105–108 (GPMR) each bind FAD. Arginine 108 is a substrate binding site. Asparagine 190 carries an N-linked (GlcNAc...) asparagine glycan. Valine 279 lines the FAD pocket. 2 N-linked (GlcNAc...) asparagine glycosylation sites follow: asparagine 299 and asparagine 404. A disulfide bond links cysteine 349 and cysteine 430. Residues glutamate 475 and 482 to 487 (GWIDST) each bind FAD. 482–483 (GW) serves as a coordination point for substrate.

The protein belongs to the flavin monoamine oxidase family. FIG1 subfamily. Homodimer; non-covalently linked. Requires FAD as cofactor. Post-translationally, N-glycosylated (14%). The enzymatic activity remains unchanged after deglycosylation. Expressed by the venom gland.

It is found in the secreted. It catalyses the reaction an L-alpha-amino acid + O2 + H2O = a 2-oxocarboxylate + H2O2 + NH4(+). The catalysed reaction is L-leucine + O2 + H2O = 4-methyl-2-oxopentanoate + H2O2 + NH4(+). The enzyme catalyses L-phenylalanine + O2 + H2O = 3-phenylpyruvate + H2O2 + NH4(+). It carries out the reaction L-tryptophan + O2 + H2O = indole-3-pyruvate + H2O2 + NH4(+). It catalyses the reaction L-methionine + O2 + H2O = 4-methylsulfanyl-2-oxobutanoate + H2O2 + NH4(+). The catalysed reaction is L-isoleucine + O2 + H2O = (S)-3-methyl-2-oxopentanoate + H2O2 + NH4(+). Inhibited by the substrate analog N-acetyl tryptophan. Its function is as follows. Catalyzes an oxidative deamination of predominantly hydrophobic and aromatic L-amino acids, thus producing hydrogen peroxide that may contribute to the diverse toxic effects of this enzyme. Is highly active on L-Met&gt;L-Leu&gt;L-Phe&gt;L-Trp=L-Ile. Binds to the cell surface and enables the production of highly localized concentration of hydrogen peroxide in or near the binding interfaces. Does not bind to phospholipids. Induces platelet-rich plasma aggregation, shows cytotoxic effects on some cancer cell lines (B16-F10 (mouse melanoma), PC12 (rat pheochromocytoma), MCF-7 and MDA-MB-231 (human breast carcinoma)) and shows antibacterial activities against both Gram-positive and Gram-negative bacteria. Also exhibits hemorrhage and edema. Does not show cytotoxicity on erythrocytes and peripheral blood mononuclear cells. Its effect on platelets is controversial, since it either induces aggregation or inhibits agonist-induced aggregation. These different effects are probably due to different experimental conditions. The protein is L-amino acid oxidase of Cerastes cerastes (Horned desert viper).